The following is a 160-amino-acid chain: Endoribonuclease YbeY (160 aa).

Zn(2+) is bound by residues H124, H128, and H134.

The protein belongs to the endoribonuclease YbeY family. Requires Zn(2+) as cofactor.

The protein localises to the cytoplasm. Its function is as follows. Single strand-specific metallo-endoribonuclease involved in late-stage 70S ribosome quality control and in maturation of the 3' terminus of the 16S rRNA. The chain is Endoribonuclease YbeY from Jannaschia sp. (strain CCS1).